A 206-amino-acid chain; its full sequence is Urease accessory protein UreG (206 aa).

Residue 11–18 coordinates GTP; it reads GPVGSGKT.

Belongs to the SIMIBI class G3E GTPase family. UreG subfamily. As to quaternary structure, homodimer. UreD, UreF and UreG form a complex that acts as a GTP-hydrolysis-dependent molecular chaperone, activating the urease apoprotein by helping to assemble the nickel containing metallocenter of UreC. The UreE protein probably delivers the nickel.

Its subcellular location is the cytoplasm. In terms of biological role, facilitates the functional incorporation of the urease nickel metallocenter. This process requires GTP hydrolysis, probably effectuated by UreG. In Mycolicibacterium gilvum (strain PYR-GCK) (Mycobacterium gilvum (strain PYR-GCK)), this protein is Urease accessory protein UreG.